Reading from the N-terminus, the 99-residue chain is MEIRIKEIKENKLIGRKEIYFEIYHPGEPTPSRKDVKGKLVAMLDLNPETTVIQYIRSYFGSYISKGYAKAYDSKERMLYIEPEYILIRDGLIEKKEGE.

The protein belongs to the eukaryotic ribosomal protein eS24 family. May be present in 2 copies per 70S ribosome. Part of the 30S ribosomal subunit, where it binds 16S rRNA at its canonical site at the bse of the body, as well as a possible second 50S binding site near 23S rRNA helix 45.

This chain is Small ribosomal subunit protein eS24, found in Pyrococcus furiosus (strain ATCC 43587 / DSM 3638 / JCM 8422 / Vc1).